The following is a 366-amino-acid chain: Mitogen-activated protein kinase 13 (366 aa).

The Protein kinase domain maps to 25–308 (YLAPAHVGSG…AAQALAHPFF (284 aa)). ATP is bound by residues 31–39 (VGSGAYGAV) and lysine 54. The active-site Proton acceptor is the aspartate 150. Residue threonine 180 is modified to Phosphothreonine; by MAP2K3, MAP2K4, MAP2K6 and MAP2K7. The short motif at 180-182 (TGY) is the TXY element. A Phosphotyrosine modification is found at tyrosine 182. Serine 350 is modified (phosphoserine).

Belongs to the protein kinase superfamily. CMGC Ser/Thr protein kinase family. MAP kinase subfamily. Interacts with MAPK8IP2. The cofactor is Mg(2+). Dually phosphorylated on Thr-180 and Tyr-182 by MAP2K3/MKK3, MAP2K4/MKK4, MAP2K6/MKK6 and MAP2K7/MKK7, which activates the enzyme. Dephosphorylated by dual specificity phosphatase DUSP1.

The enzyme catalyses L-seryl-[protein] + ATP = O-phospho-L-seryl-[protein] + ADP + H(+). It catalyses the reaction L-threonyl-[protein] + ATP = O-phospho-L-threonyl-[protein] + ADP + H(+). With respect to regulation, activated by phosphorylation on threonine and tyrosine by dual specificity kinases, MAP2K3/MKK3, MAP2K6/MKK6, MAP2K4/MKK4 and MAP2K7/MKK7. Activation by ultraviolet radiation, hyperosmotic shock, anisomycin or by TNF-alpha is mediated by MAP2K3/MKK3. Inhibited by dual specificity phosphatase DUSP1. Functionally, serine/threonine kinase which acts as an essential component of the MAP kinase signal transduction pathway. MAPK13 is one of the four p38 MAPKs which play an important role in the cascades of cellular responses evoked by extracellular stimuli such as pro-inflammatory cytokines or physical stress leading to direct activation of transcription factors such as ELK1 and ATF2. Accordingly, p38 MAPKs phosphorylate a broad range of proteins and it has been estimated that they may have approximately 200 to 300 substrates each. MAPK13 is one of the less studied p38 MAPK isoforms. Some of the targets are downstream kinases such as MAPKAPK2, which are activated through phosphorylation and further phosphorylate additional targets. Plays a role in the regulation of protein translation by phosphorylating and inactivating EEF2K. Involved in cytoskeletal remodeling through phosphorylation of MAPT and STMN1. Mediates UV irradiation induced up-regulation of the gene expression of CXCL14. Plays an important role in the regulation of epidermal keratinocyte differentiation, apoptosis and skin tumor development. Phosphorylates the transcriptional activator MYB in response to stress which leads to rapid MYB degradation via a proteasome-dependent pathway. MAPK13 also phosphorylates and down-regulates PRKD1 during regulation of insulin secretion in pancreatic beta cells. The protein is Mitogen-activated protein kinase 13 (Mapk13) of Mus musculus (Mouse).